A 726-amino-acid chain; its full sequence is X-ray repair cross-complementing protein 5 (726 aa).

The region spanning 8 to 160 is the VWFA domain; sequence AVVLCMDVGL…ANLKKAEITL (153 aa). Residues 137 to 164 form a leucine-zipper region; it reads LSSPFSVDQLEVIIANLKKAEITLQFFL. Positions 175–186 are enriched in low complexity; the sequence is GSSNNRGNAGSS. The segment at 175–198 is disordered; the sequence is GSSNNRGNAGSSDRGCGPGKGLSD. The region spanning 253 to 449 is the Ku domain; that stretch reads GSSLSIRIVG…NKKFTPTESQ (197 aa). The EEXXXDL motif motif lies at 714 to 722; that stretch reads EDEGDVDDL.

Belongs to the ku80 family. Heterodimer composed of xrcc5/Ku80 and xrcc6/Ku70. Ubiquitinated via 'Lys-48'-linked polyubiquitination at DNA double strand break sites (DSBs), leading to its release from DSBs and subsequent proteasomal degradation. Polyubiquitination is not required for completion of NHEJ. Expressed at high levels in oocyte and testis.

The protein resides in the nucleus. Its function is as follows. Single-stranded DNA-dependent ATP-dependent helicase that plays a key role in DNA non-homologous end joining (NHEJ). In Xenopus laevis (African clawed frog), this protein is X-ray repair cross-complementing protein 5.